The sequence spans 469 residues: 3-isopropylmalate dehydratase large subunit (469 aa).

Positions 347, 408, and 411 each coordinate [4Fe-4S] cluster.

The protein belongs to the aconitase/IPM isomerase family. LeuC type 1 subfamily. In terms of assembly, heterodimer of LeuC and LeuD. It depends on [4Fe-4S] cluster as a cofactor.

It catalyses the reaction (2R,3S)-3-isopropylmalate = (2S)-2-isopropylmalate. Its pathway is amino-acid biosynthesis; L-leucine biosynthesis; L-leucine from 3-methyl-2-oxobutanoate: step 2/4. Catalyzes the isomerization between 2-isopropylmalate and 3-isopropylmalate, via the formation of 2-isopropylmaleate. In Actinobacillus pleuropneumoniae serotype 5b (strain L20), this protein is 3-isopropylmalate dehydratase large subunit.